The sequence spans 307 residues: Acetaldehyde dehydrogenase (307 aa).

The Acyl-thioester intermediate role is filled by Cys131. NAD(+) contacts are provided by residues 162 to 170 (SIGPGTRKN) and Asn273.

It belongs to the acetaldehyde dehydrogenase family.

The catalysed reaction is acetaldehyde + NAD(+) + CoA = acetyl-CoA + NADH + H(+). This is Acetaldehyde dehydrogenase (nahO) from Stutzerimonas stutzeri (Pseudomonas stutzeri).